Reading from the N-terminus, the 128-residue chain is Iron-sulfur cluster insertion protein ErpA (128 aa).

Positions 56, 120, and 122 each coordinate iron-sulfur cluster.

The protein belongs to the HesB/IscA family. Homodimer. Iron-sulfur cluster is required as a cofactor.

In terms of biological role, required for insertion of 4Fe-4S clusters for at least IspG. This chain is Iron-sulfur cluster insertion protein ErpA, found in Xanthomonas axonopodis pv. citri (strain 306).